A 225-amino-acid polypeptide reads, in one-letter code: Peptidyl-tRNA hydrolase (225 aa).

Tyr14 lines the tRNA pocket. His19 serves as the catalytic Proton acceptor. TRNA-binding residues include Phe64, Asn66, and Asn112. The interval 182-225 is disordered; it reads AVALRMQPPKPEKPKPAAKAPEAQAPEAAPDERSALQKLADRFR. Low complexity predominate over residues 198-209; it reads AAKAPEAQAPEA. A compositionally biased stretch (basic and acidic residues) spans 211-225; that stretch reads PDERSALQKLADRFR.

Belongs to the PTH family. In terms of assembly, monomer.

It localises to the cytoplasm. It catalyses the reaction an N-acyl-L-alpha-aminoacyl-tRNA + H2O = an N-acyl-L-amino acid + a tRNA + H(+). Hydrolyzes ribosome-free peptidyl-tRNAs (with 1 or more amino acids incorporated), which drop off the ribosome during protein synthesis, or as a result of ribosome stalling. Its function is as follows. Catalyzes the release of premature peptidyl moieties from peptidyl-tRNA molecules trapped in stalled 50S ribosomal subunits, and thus maintains levels of free tRNAs and 50S ribosomes. This chain is Peptidyl-tRNA hydrolase, found in Cereibacter sphaeroides (strain ATCC 17029 / ATH 2.4.9) (Rhodobacter sphaeroides).